A 169-amino-acid chain; its full sequence is Crossover junction endodeoxyribonuclease RuvC (169 aa).

Active-site residues include Asp-12, Glu-72, and Asp-144. 3 residues coordinate Mg(2+): Asp-12, Glu-72, and Asp-144.

Belongs to the RuvC family. Homodimer which binds Holliday junction (HJ) DNA. The HJ becomes 2-fold symmetrical on binding to RuvC with unstacked arms; it has a different conformation from HJ DNA in complex with RuvA. In the full resolvosome a probable DNA-RuvA(4)-RuvB(12)-RuvC(2) complex forms which resolves the HJ. Mg(2+) serves as cofactor.

The protein resides in the cytoplasm. It catalyses the reaction Endonucleolytic cleavage at a junction such as a reciprocal single-stranded crossover between two homologous DNA duplexes (Holliday junction).. Its function is as follows. The RuvA-RuvB-RuvC complex processes Holliday junction (HJ) DNA during genetic recombination and DNA repair. Endonuclease that resolves HJ intermediates. Cleaves cruciform DNA by making single-stranded nicks across the HJ at symmetrical positions within the homologous arms, yielding a 5'-phosphate and a 3'-hydroxyl group; requires a central core of homology in the junction. The consensus cleavage sequence is 5'-(A/T)TT(C/G)-3'. Cleavage occurs on the 3'-side of the TT dinucleotide at the point of strand exchange. HJ branch migration catalyzed by RuvA-RuvB allows RuvC to scan DNA until it finds its consensus sequence, where it cleaves and resolves the cruciform DNA. This is Crossover junction endodeoxyribonuclease RuvC from Xanthobacter autotrophicus (strain ATCC BAA-1158 / Py2).